Here is a 332-residue protein sequence, read N- to C-terminus: Ketol-acid reductoisomerase (NADP(+)) (332 aa).

Residues 1–182 enclose the KARI N-terminal Rossmann domain; sequence MATIYRDKDA…GGTRAGVLET (182 aa). NADP(+) contacts are provided by residues 25–28, Lys49, Ser51, and 83–86; these read YGNQ and DELQ. His108 is a catalytic residue. Residue Gly134 participates in NADP(+) binding. The KARI C-terminal knotted domain occupies 183 to 328; sequence TFAEETETDL…AELRAMMPWL (146 aa). Asp191, Glu195, Glu227, and Glu231 together coordinate Mg(2+). Substrate is bound at residue Ser252.

The protein belongs to the ketol-acid reductoisomerase family. Mg(2+) is required as a cofactor.

It catalyses the reaction (2R)-2,3-dihydroxy-3-methylbutanoate + NADP(+) = (2S)-2-acetolactate + NADPH + H(+). The catalysed reaction is (2R,3R)-2,3-dihydroxy-3-methylpentanoate + NADP(+) = (S)-2-ethyl-2-hydroxy-3-oxobutanoate + NADPH + H(+). It participates in amino-acid biosynthesis; L-isoleucine biosynthesis; L-isoleucine from 2-oxobutanoate: step 2/4. The protein operates within amino-acid biosynthesis; L-valine biosynthesis; L-valine from pyruvate: step 2/4. Functionally, involved in the biosynthesis of branched-chain amino acids (BCAA). Catalyzes an alkyl-migration followed by a ketol-acid reduction of (S)-2-acetolactate (S2AL) to yield (R)-2,3-dihydroxy-isovalerate. In the isomerase reaction, S2AL is rearranged via a Mg-dependent methyl migration to produce 3-hydroxy-3-methyl-2-ketobutyrate (HMKB). In the reductase reaction, this 2-ketoacid undergoes a metal-dependent reduction by NADPH to yield (R)-2,3-dihydroxy-isovalerate. The sequence is that of Ketol-acid reductoisomerase (NADP(+)) from Methanothrix thermoacetophila (strain DSM 6194 / JCM 14653 / NBRC 101360 / PT) (Methanosaeta thermophila).